A 109-amino-acid polypeptide reads, in one-letter code: uncharacterized protein (109 aa).

An N-terminal signal peptide occupies residues 1-28 (MNMLAYFLYCRQLLLAVVLIEFPPRLCG).

This is an uncharacterized protein from Homo sapiens (Human).